Here is a 220-residue protein sequence, read N- to C-terminus: Ribose-5-phosphate isomerase A (220 aa).

Residues 25-28 (TGST), 80-83 (DGAD), and 93-96 (KGGG) contribute to the substrate site. The Proton acceptor role is filled by Glu-102. Lys-120 contacts substrate.

It belongs to the ribose 5-phosphate isomerase family. In terms of assembly, homodimer.

The enzyme catalyses aldehydo-D-ribose 5-phosphate = D-ribulose 5-phosphate. The protein operates within carbohydrate degradation; pentose phosphate pathway; D-ribose 5-phosphate from D-ribulose 5-phosphate (non-oxidative stage): step 1/1. Catalyzes the reversible conversion of ribose-5-phosphate to ribulose 5-phosphate. The sequence is that of Ribose-5-phosphate isomerase A from Bacillus cereus (strain ATCC 14579 / DSM 31 / CCUG 7414 / JCM 2152 / NBRC 15305 / NCIMB 9373 / NCTC 2599 / NRRL B-3711).